The primary structure comprises 160 residues: 17.9 kDa class II heat shock protein (160 aa).

Residues 44–160 form the sHSP domain; the sequence is DARAMAATPA…KPKTIQVQVA (117 aa).

Belongs to the small heat shock protein (HSP20) family.

Its subcellular location is the cytoplasm. The sequence is that of 17.9 kDa class II heat shock protein (HSP17.9) from Helianthus annuus (Common sunflower).